A 219-amino-acid polypeptide reads, in one-letter code: Ropporin-1-like protein (219 aa).

The RIIa domain maps to 17-54 (PELPDILKQFTKAAIRTQPHDLLQWSAAYFDSLSKGEP).

This sequence belongs to the ropporin family. As to quaternary structure, component of axonemal radial spoke complexes.

The protein localises to the cell projection. It is found in the cilium. It localises to the flagellum. In terms of biological role, functions as part of axonemal radial spoke complexes that play an important part in the motility of sperm and cilia. Important for male fertility. Involved in fibrous sheath integrity and sperm motility, plays a role in PKA-dependent signaling processes required for spermatozoa capacitation. This chain is Ropporin-1-like protein (ropn1l), found in Xenopus laevis (African clawed frog).